The primary structure comprises 346 residues: Putative cytochrome bd menaquinol oxidase subunit II (346 aa).

9 helical membrane passes run 7-27 (ALIA…MATM), 63-83 (VFIV…TFVL), 87-107 (LLIP…FLVF), 119-139 (YISG…LPVT), 164-184 (AYSF…LLLA), 201-221 (KSAL…MVTM), 236-256 (FSWI…LFLP), 269-289 (LALV…GRAH), and 312-332 (ALFA…FFFW).

The protein belongs to the cytochrome ubiquinol oxidase subunit 2 family.

The protein resides in the cell membrane. In terms of biological role, may have a role in sporulation. Can compensate for the loss of cytochrome aa3. The chain is Putative cytochrome bd menaquinol oxidase subunit II (ythB) from Bacillus subtilis (strain 168).